A 770-amino-acid polypeptide reads, in one-letter code: U3 small nucleolar RNA-associated protein 14 homolog A (770 aa).

Polar residues predominate over residues 1-17 (MNANQAAESNLLASNQQ). A disordered region spans residues 1 to 65 (MNANQAAESN…GKDRQKLADR (65 aa)). A phosphoserine mark is found at S30, S32, and S53. Residues 41 to 68 (ERKHQKLLESISSLNGKDRQKLADRSEA) are a coiled coil. The span at 56-65 (GKDRQKLADR) shows a compositional bias: basic and acidic residues. Phosphoserine is present on residues S78 and S82. The residue at position 206 (T206) is a Phosphothreonine. Coiled-coil stretches lie at residues 217–291 (SLEE…DKAR) and 318–348 (LEARQAMQEQLARNKELTQKVRAASESEEEG). 3 disordered regions span residues 334–361 (LTQKVRAASESEEEGEGQEEEEEPLVPD), 392–455 (KDLE…SSQE), and 467–505 (LRTENHQSGKQELSSARTAQREEPAREEEEPMLLQRPER). 2 stretches are compositionally biased toward acidic residues: residues 343-358 (ESEEEGEGQEEEEEPL) and 396-410 (DPAEPEAQETSESEE). 2 positions are modified to phosphoserine: S406 and S408. A compositionally biased stretch (basic and acidic residues) spans 411–444 (EKAVVEEETLLKEFEERRSLRQKSELNHMAEPVH). K449 participates in a covalent cross-link: Glycyl lysine isopeptide (Lys-Gly) (interchain with G-Cter in SUMO2). S453 carries the post-translational modification Phosphoserine. S567 carries the phosphoserine modification. Position 588 is a citrulline (R588). K732 participates in a covalent cross-link: Glycyl lysine isopeptide (Lys-Gly) (interchain with G-Cter in SUMO2).

The protein belongs to the UTP14 family. In terms of assembly, interacts with DHX37. In terms of processing, citrullinated by PADI4.

The protein resides in the nucleus. It localises to the nucleolus. Its function is as follows. May be required for ribosome biogenesis. This chain is U3 small nucleolar RNA-associated protein 14 homolog A (UTP14A), found in Bos taurus (Bovine).